Consider the following 497-residue polypeptide: MSQAGNSPLYAAIDLGSNSFHMLVVRHIDGSVQTMAKIKRKVRLAAGLDEHNALSKEAMQRGWDCLSLFAERLQDIPAEHIRIVGTATLRTATNVDLFLQKANQILGHPIEVISGEEEAATIYKGVAHTSGGSGRRLVVDIGGASTELIIGEGFEAKALTSLKMGCVTWLENFFKDRQLSARNFEAAIEGAKQTLLPILEQYKSLGWDVCVGASGTVQALQEIMLAQGMDEVITHAKLKRLQKQAMLADHLEELEIEGLTLERALVFPSGLSILIAIFELLEIDAMTLAGGALREGLAYEMMSELRQDDIRARTIGSIQSRYQLDSQYGQQVANLALKLLQQVGDVMWIPEPQGAMLLETTAKLHEIGLTIDFKKGGEHSAYLMQHLDLPGFTRAQKFLMGEIARRYREGLTSLPEQHALSGNSGKRLLRLLRLAVILSHRRQPSLEPEVTLSAEGDKLTLAIDAQWLENNPLTAAELELEANRQTDIGWPLVIESR.

The protein belongs to the GppA/Ppx family. GppA subfamily.

The catalysed reaction is guanosine 3'-diphosphate 5'-triphosphate + H2O = guanosine 3',5'-bis(diphosphate) + phosphate + H(+). Its pathway is purine metabolism; ppGpp biosynthesis; ppGpp from GTP: step 2/2. Its function is as follows. Catalyzes the conversion of pppGpp to ppGpp. Guanosine pentaphosphate (pppGpp) is a cytoplasmic signaling molecule which together with ppGpp controls the 'stringent response', an adaptive process that allows bacteria to respond to amino acid starvation, resulting in the coordinated regulation of numerous cellular activities. This chain is Guanosine-5'-triphosphate,3'-diphosphate pyrophosphatase, found in Vibrio vulnificus (strain YJ016).